The sequence spans 438 residues: Serine hydroxymethyltransferase (438 aa).

Residues L133 and 137–139 (GHL) each bind (6S)-5,6,7,8-tetrahydrofolate. K242 is subject to N6-(pyridoxal phosphate)lysine.

Belongs to the SHMT family. In terms of assembly, homodimer. It depends on pyridoxal 5'-phosphate as a cofactor.

Its subcellular location is the cytoplasm. The enzyme catalyses (6R)-5,10-methylene-5,6,7,8-tetrahydrofolate + glycine + H2O = (6S)-5,6,7,8-tetrahydrofolate + L-serine. Its pathway is one-carbon metabolism; tetrahydrofolate interconversion. The protein operates within amino-acid biosynthesis; glycine biosynthesis; glycine from L-serine: step 1/1. In terms of biological role, catalyzes the reversible interconversion of serine and glycine with tetrahydrofolate (THF) serving as the one-carbon carrier. This reaction serves as the major source of one-carbon groups required for the biosynthesis of purines, thymidylate, methionine, and other important biomolecules. Also exhibits THF-independent aldolase activity toward beta-hydroxyamino acids, producing glycine and aldehydes, via a retro-aldol mechanism. The chain is Serine hydroxymethyltransferase from Brucella abortus (strain S19).